The primary structure comprises 322 residues: Ribonucleoside-diphosphate reductase subunit beta nrdF1 (322 aa).

Residues Asp-70, Glu-101, and His-104 each contribute to the Fe cation site. Tyr-108 is an active-site residue. 3 residues coordinate Fe cation: Glu-161, Glu-195, and His-198.

This sequence belongs to the ribonucleoside diphosphate reductase small chain family. As to quaternary structure, tetramer of two alpha and two beta subunits. Fe cation serves as cofactor.

The enzyme catalyses a 2'-deoxyribonucleoside 5'-diphosphate + [thioredoxin]-disulfide + H2O = a ribonucleoside 5'-diphosphate + [thioredoxin]-dithiol. Its function is as follows. Provides the precursors necessary for DNA synthesis. Catalyzes the biosynthesis of deoxyribonucleotides from the corresponding ribonucleotides. The protein is Ribonucleoside-diphosphate reductase subunit beta nrdF1 (nrdF1) of Mycobacterium tuberculosis (strain CDC 1551 / Oshkosh).